Here is a 413-residue protein sequence, read N- to C-terminus: Putative competence-damage inducible protein (413 aa).

Belongs to the CinA family.

The polypeptide is Putative competence-damage inducible protein (Pediococcus pentosaceus (strain ATCC 25745 / CCUG 21536 / LMG 10740 / 183-1w)).